The sequence spans 158 residues: Regulator of sigma D (158 aa).

This sequence belongs to the Rsd/AlgQ family. As to quaternary structure, interacts with RpoD.

The protein localises to the cytoplasm. In terms of biological role, binds RpoD and negatively regulates RpoD-mediated transcription activation by preventing the interaction between the primary sigma factor RpoD with the catalytic core of the RNA polymerase and with promoter DNA. May be involved in replacement of the RNA polymerase sigma subunit from RpoD to RpoS during the transition from exponential growth to the stationary phase. In Shigella boydii serotype 4 (strain Sb227), this protein is Regulator of sigma D.